Reading from the N-terminus, the 1687-residue chain is A-kinase anchor protein SPHKAP (1687 aa).

Polar residues predominate over residues 1-14; sequence MDVNSRLSVQSNVE. Disordered stretches follow at residues 1–25 and 272–293; these read MDVNSRLSVQSNVESPLMHEGPEPQ and RKHRTPSTKTEGSKENTEENTS. Residues 914–931 form a PKA-RII subunit binding domain region; it reads FAEELAETVVSMATEIAA. The tract at residues 964-989 is disordered; that stretch reads LKRKKENSSAGSTVRKHKPPRLSEIK. Phosphoserine is present on residues S1010, S1070, S1092, S1105, S1106, S1109, S1244, and S1273. Disordered stretches follow at residues 1363 to 1406 and 1421 to 1520; these read VTEG…SPRR and DQKE…PDDT. Over residues 1366–1375 the composition is skewed to polar residues; the sequence is GNHSPVSSPG. The span at 1382–1393 shows a compositional bias: basic and acidic residues; that stretch reads KPSDFDPRRETS. Over residues 1461 to 1470 the composition is skewed to polar residues; the sequence is TAPSTCQSSR. Residues 1482–1494 are compositionally biased toward basic and acidic residues; the sequence is EVLKEDIPRDESR. The span at 1495-1508 shows a compositional bias: low complexity; that stretch reads NPPSSSEESTGSWS.

It belongs to the AKAP110 family. As to quaternary structure, interacts (via the PKA-RII subunit binding domain) with the RI subunit of PKA. Interacts with SPHK1; the interaction greatly reduces SPHK1 activity.

Its subcellular location is the cytoplasm. Its function is as follows. Anchoring protein that binds preferentially to the type I regulatory subunit of c-AMP-dependent protein kinase (PKA type I) and targets it to distinct subcellular compartments. May act as a converging factor linking cAMP and sphingosine signaling pathways. Plays a regulatory role in the modulation of SPHK1. This Mus musculus (Mouse) protein is A-kinase anchor protein SPHKAP (Sphkap).